We begin with the raw amino-acid sequence, 483 residues long: Glycogen synthase kinase-3 alpha (483 aa).

Residues 1–15 (MSGGGPSGGGPGGSG) show a composition bias toward gly residues. Positions 1 to 96 (MSGGGPSGGG…PPPGVKLGRD (96 aa)) are disordered. Ser-2 carries the post-translational modification N-acetylserine. Phosphoserine is present on Ser-2. A Phosphoserine; by PKB/AKT1 modification is found at Ser-21. Over residues 25–82 (PGGGGGGGGGGPGGSASGPGGTGGGKASVGAMGGGVGASSSGGGPGGSGGGGSGGPGA) the composition is skewed to gly residues. 3 positions are modified to phosphoserine: Ser-72, Ser-77, and Ser-97. The Protein kinase domain maps to 119-403 (YTDIKVIGNG…PLEACAHSFF (285 aa)). Residues 125-133 (IGNGSFGVV) and Lys-148 each bind ATP. Residue Asp-244 is the Proton acceptor of the active site. Tyr-279 is subject to Phosphotyrosine. The segment at 449-483 (AGTTTLTPSSQALTETPTSSDWQSTDATPTLTNSS) is disordered.

It belongs to the protein kinase superfamily. CMGC Ser/Thr protein kinase family. GSK-3 subfamily. In terms of assembly, monomer. Interacts with ARRB2. Interacts with AXIN1 and CTNNB1/beta-catenin. Interacts with CTNND2. Interacts with LMBR1L. Interacts with DDX3X. Interacts with TNFRSF10B. Interacts with RICTOR; the interaction results in phosphorylation of RICTOR at 'Thr-1695' by GSK3A which facilitates FBXW7-mediated ubiquitination and subsequent degradation of RICTOR. (Microbial infection) Interacts with M.tuberculosis PtpA. Phosphorylated by AKT1 at Ser-21: upon insulin-mediated signaling, the activated PKB/AKT1 protein kinase phosphorylates and deactivates GSK3A, resulting in the dephosphorylation and activation of GYS1. Activated by phosphorylation at Tyr-279. Post-translationally, (Microbial infection) Dephosphorylated at Tyr-279 by M.tuberculosis PtpA, which leads to prevention of apoptosis during early stages of microbial infection.

The catalysed reaction is L-seryl-[tau protein] + ATP = O-phospho-L-seryl-[tau protein] + ADP + H(+). It catalyses the reaction L-threonyl-[tau protein] + ATP = O-phospho-L-threonyl-[tau protein] + ADP + H(+). The enzyme catalyses L-seryl-[protein] + ATP = O-phospho-L-seryl-[protein] + ADP + H(+). It carries out the reaction L-threonyl-[protein] + ATP = O-phospho-L-threonyl-[protein] + ADP + H(+). With respect to regulation, activated by phosphorylation at Tyr-279. In response to insulin, inhibited by phosphorylation at Ser-21 by PKB/AKT1; phosphorylation at this site causes a conformational change, preventing access of substrates to the active site. Inhibited by lithium. Constitutively active protein kinase that acts as a negative regulator in the hormonal control of glucose homeostasis, Wnt signaling and regulation of transcription factors and microtubules, by phosphorylating and inactivating glycogen synthase (GYS1 or GYS2), CTNNB1/beta-catenin, APC and AXIN1. Requires primed phosphorylation of the majority of its substrates. Contributes to insulin regulation of glycogen synthesis by phosphorylating and inhibiting GYS1 activity and hence glycogen synthesis. Regulates glycogen metabolism in liver, but not in muscle. May also mediate the development of insulin resistance by regulating activation of transcription factors. In Wnt signaling, regulates the level and transcriptional activity of nuclear CTNNB1/beta-catenin. Facilitates amyloid precursor protein (APP) processing and the generation of APP-derived amyloid plaques found in Alzheimer disease. May be involved in the regulation of replication in pancreatic beta-cells. Is necessary for the establishment of neuronal polarity and axon outgrowth. Through phosphorylation of the anti-apoptotic protein MCL1, may control cell apoptosis in response to growth factors deprivation. Acts as a regulator of autophagy by mediating phosphorylation of KAT5/TIP60 under starvation conditions which activates KAT5/TIP60 acetyltransferase activity and promotes acetylation of key autophagy regulators, such as ULK1 and RUBCNL/Pacer. Negatively regulates extrinsic apoptotic signaling pathway via death domain receptors. Promotes the formation of an anti-apoptotic complex, made of DDX3X, BRIC2 and GSK3B, at death receptors, including TNFRSF10B. The anti-apoptotic function is most effective with weak apoptotic signals and can be overcome by stronger stimulation. Phosphorylates mTORC2 complex component RICTOR at 'Thr-1695' which facilitates FBXW7-mediated ubiquitination and subsequent degradation of RICTOR. The chain is Glycogen synthase kinase-3 alpha (GSK3A) from Homo sapiens (Human).